Consider the following 121-residue polypeptide: Large ribosomal subunit protein bL19 (121 aa).

This sequence belongs to the bacterial ribosomal protein bL19 family.

This protein is located at the 30S-50S ribosomal subunit interface and may play a role in the structure and function of the aminoacyl-tRNA binding site. The chain is Large ribosomal subunit protein bL19 from Symbiobacterium thermophilum (strain DSM 24528 / JCM 14929 / IAM 14863 / T).